A 98-amino-acid chain; its full sequence is MSMVYANIFLAFIMSLMGLLMYRSHLMSSLLCLEGMMLSLFVMMTVTILNNHFTLANMAPIILLVFAACEAALGLSLLVMVSNTYGTDYVQNLNLLQC.

3 consecutive transmembrane segments (helical) span residues 1 to 21, 29 to 49, and 61 to 81; these read MSMV…GLLM, SLLC…VTIL, and IILL…LVMV.

This sequence belongs to the complex I subunit 4L family. Core subunit of respiratory chain NADH dehydrogenase (Complex I) which is composed of 45 different subunits.

It localises to the mitochondrion inner membrane. It catalyses the reaction a ubiquinone + NADH + 5 H(+)(in) = a ubiquinol + NAD(+) + 4 H(+)(out). Core subunit of the mitochondrial membrane respiratory chain NADH dehydrogenase (Complex I) which catalyzes electron transfer from NADH through the respiratory chain, using ubiquinone as an electron acceptor. Part of the enzyme membrane arm which is embedded in the lipid bilayer and involved in proton translocation. The sequence is that of NADH-ubiquinone oxidoreductase chain 4L (MT-ND4L) from Phoca fasciata (Ribbon seal).